The sequence spans 580 residues: Probable glucomannan 4-beta-mannosyltransferase 2 (580 aa).

Residues 1 to 12 are compositionally biased toward polar residues; sequence MSTNGGAPSQKR. The interval 1 to 33 is disordered; it reads MSTNGGAPSQKRSWLPSRPLLTTTTQTYPPPLL. Residues 15 to 27 are compositionally biased toward low complexity; the sequence is LPSRPLLTTTTQT. Residues 85–105 traverse the membrane as a helical segment; sequence AVWACLAMSAMLVAEAAWMGL. Aspartate 182 is an active-site residue. 2 residues coordinate substrate: aspartate 241 and aspartate 243. Aspartate 335 is an active-site residue. 4 helical membrane-spanning segments follow: residues 414 to 434, 437 to 457, 528 to 548, and 554 to 574; these read AIAP…SAMV, VTIP…MNAI, IYIP…YDFV, and YYIY…GFVG.

The protein belongs to the glycosyltransferase 2 family. Plant cellulose synthase-like A subfamily.

It localises to the golgi apparatus membrane. It catalyses the reaction GDP-mannose + (glucomannan)n = GDP + (glucomannan)n+1.. Its function is as follows. Probable mannan synthase which consists of a 4-beta-mannosyltransferase activity on mannan using GDP-mannose. The beta-1,4-mannan product is the backbone for galactomannan synthesis by galactomannan galactosyltransferase. Galactomannan is a noncellulosic polysaccharides of plant cell wall. The protein is Probable glucomannan 4-beta-mannosyltransferase 2 of Oryza sativa subsp. japonica (Rice).